A 684-amino-acid chain; its full sequence is Threonine--tRNA ligase (684 aa).

Positions 1-64 (MTAPNPSSLV…ESDTEVEPVA (64 aa)) constitute a TGS domain. Residues 261–567 (DHRKLGVELD…LTEHYAGAFP (307 aa)) form a catalytic region. Residues Cys-366, His-417, and His-544 each coordinate Zn(2+).

Belongs to the class-II aminoacyl-tRNA synthetase family. As to quaternary structure, homodimer. The cofactor is Zn(2+).

The protein resides in the cytoplasm. The catalysed reaction is tRNA(Thr) + L-threonine + ATP = L-threonyl-tRNA(Thr) + AMP + diphosphate + H(+). Its function is as follows. Catalyzes the attachment of threonine to tRNA(Thr) in a two-step reaction: L-threonine is first activated by ATP to form Thr-AMP and then transferred to the acceptor end of tRNA(Thr). Also edits incorrectly charged L-seryl-tRNA(Thr). The sequence is that of Threonine--tRNA ligase from Mycobacteroides abscessus (strain ATCC 19977 / DSM 44196 / CCUG 20993 / CIP 104536 / JCM 13569 / NCTC 13031 / TMC 1543 / L948) (Mycobacterium abscessus).